Here is a 283-residue protein sequence, read N- to C-terminus: MKHKIDVVKTLLDALPFIKKFSNEKIVVKYGGAAQTSAELKEQFAQDIVLLHLVGMKPIIVHGGGKSITQLLADLGVDTTFIDGQRVTTKEVMRIVEMVLSGEINKEIVSLLDNHGAKAIGISGKDGGFLKGMPKDFENFGYTGLIEDIDPEIVDNIIDDDAVPVIAPIAGSNILGHPGFNINADLAASRIAVALEARKILFLTDTPGVLDKEMELITNLSIEQTEALKEDGTIQGGMVPKVDACIEALRGGVKKAHIIDGRVEHSLLLEILTSSGVGTCIEL.

Substrate contacts are provided by residues 64 to 65 (GG), R86, and N181.

It belongs to the acetylglutamate kinase family. ArgB subfamily.

The protein localises to the cytoplasm. It carries out the reaction N-acetyl-L-glutamate + ATP = N-acetyl-L-glutamyl 5-phosphate + ADP. It participates in amino-acid biosynthesis; L-arginine biosynthesis; N(2)-acetyl-L-ornithine from L-glutamate: step 2/4. In terms of biological role, catalyzes the ATP-dependent phosphorylation of N-acetyl-L-glutamate. This chain is Acetylglutamate kinase, found in Sulfurovum sp. (strain NBC37-1).